The chain runs to 117 residues: Putative iron-sulfur cluster insertion protein ErpA (117 aa).

Positions 45, 109, and 111 each coordinate iron-sulfur cluster.

Belongs to the HesB/IscA family. Homodimer. It depends on iron-sulfur cluster as a cofactor.

Required for insertion of 4Fe-4S clusters. This chain is Putative iron-sulfur cluster insertion protein ErpA, found in Methylobacillus flagellatus (strain ATCC 51484 / DSM 6875 / VKM B-1610 / KT).